The sequence spans 434 residues: Tol-Pal system protein TolB (434 aa).

Positions 1–28 are cleaved as a signal peptide; it reads MMNTRVWCKIIGMLALLVWLVSSPSVFA.

It belongs to the TolB family. In terms of assembly, the Tol-Pal system is composed of five core proteins: the inner membrane proteins TolA, TolQ and TolR, the periplasmic protein TolB and the outer membrane protein Pal. They form a network linking the inner and outer membranes and the peptidoglycan layer.

The protein localises to the periplasm. Functionally, part of the Tol-Pal system, which plays a role in outer membrane invagination during cell division and is important for maintaining outer membrane integrity. The chain is Tol-Pal system protein TolB from Nitrosococcus oceani (strain ATCC 19707 / BCRC 17464 / JCM 30415 / NCIMB 11848 / C-107).